We begin with the raw amino-acid sequence, 745 residues long: Capsid protein (745 aa).

Disordered regions lie at residues 23 to 44, 598 to 619, and 660 to 700; these read RRPL…RRTV, PCKT…QVAD, and QPKR…EQAT. 2 stretches are compositionally biased toward basic and acidic residues: residues 599–612 and 675–691; these read CKTD…DRHP and GEFR…EERS.

Belongs to the anelloviridae capsid protein family.

It localises to the virion. In terms of biological role, self assemble to form an icosahedral capsid. This Homo sapiens (Human) protein is Capsid protein.